The sequence spans 698 residues: DNA ligase (698 aa).

Residues 35-39 (DSVYD), 84-85 (SL), and E123 each bind NAD(+). K125 (N6-AMP-lysine intermediate) is an active-site residue. Residues R146, E183, K302, and K326 each contribute to the NAD(+) site. Positions 420, 423, 438, and 443 each coordinate Zn(2+). Residues 612–698 (NGKGHLNGQT…QNSADTIHLL (87 aa)) enclose the BRCT domain.

Belongs to the NAD-dependent DNA ligase family. LigA subfamily. It depends on Mg(2+) as a cofactor. Mn(2+) is required as a cofactor.

The enzyme catalyses NAD(+) + (deoxyribonucleotide)n-3'-hydroxyl + 5'-phospho-(deoxyribonucleotide)m = (deoxyribonucleotide)n+m + AMP + beta-nicotinamide D-nucleotide.. DNA ligase that catalyzes the formation of phosphodiester linkages between 5'-phosphoryl and 3'-hydroxyl groups in double-stranded DNA using NAD as a coenzyme and as the energy source for the reaction. It is essential for DNA replication and repair of damaged DNA. The polypeptide is DNA ligase (Synechococcus sp. (strain WH7803)).